A 174-amino-acid polypeptide reads, in one-letter code: MSESPSWMAKVEKIANDVAAAQGCVLYDIEFVGLGKGRTLRLFIDREEEGAISIEDCTNVSRGLSEILDADEEMIPGGEYNLEVSTPGLDRHLKKPWHFKKAIGKKVYIKTTKALESVGVEDKKWKNAKTVEEVLESADEQGVRFVVKDVEIKIPYAMIDRAKLVFEYTKGQKK.

Belongs to the RimP family.

It localises to the cytoplasm. In terms of biological role, required for maturation of 30S ribosomal subunits. The polypeptide is Ribosome maturation factor RimP (Bdellovibrio bacteriovorus (strain ATCC 15356 / DSM 50701 / NCIMB 9529 / HD100)).